Reading from the N-terminus, the 585-residue chain is Nucleus accumbens-associated protein 2 (585 aa).

The BTB domain maps to 30-94 (CDVSIVVKGQ…CYTGKLTMAA (65 aa)). Residues Lys171 and Lys215 each participate in a glycyl lysine isopeptide (Lys-Gly) (interchain with G-Cter in SUMO2) cross-link. Residues 238-261 (PYPQGERTSPGASSLPTTDSSTSY) are compositionally biased toward polar residues. The tract at residues 238-269 (PYPQGERTSPGASSLPTTDSSTSYHNEDEDDD) is disordered. Glycyl lysine isopeptide (Lys-Gly) (interchain with G-Cter in SUMO2) cross-links involve residues Lys296, Lys426, and Lys453. The BEN domain maps to 348–445 (GSGVYITRGQ…DMCTNARRVR (98 aa)). A disordered region spans residues 541–585 (APEQLPADGQSSPQAFEQGNTSSSRPQTPVATATRRPEGTYAGTL). Over residues 549–571 (GQSSPQAFEQGNTSSSRPQTPVA) the composition is skewed to polar residues.

Homooligomer; mediated by the BTB domain. Interacts with the NuRD complex. Interacts (via C-terminal part) with HDAC2. Interacts (via BTB domain) with MTA1, MTA2 and MTA3.

Its subcellular location is the nucleus. Functions as a transcriptional repressor through its association with the NuRD complex. Recruits the NuRD complex to the promoter of MDM2, leading to the repression of MDM2 transcription and subsequent stability of p53/TP53. The protein is Nucleus accumbens-associated protein 2 (Nacc2) of Rattus norvegicus (Rat).